The sequence spans 160 residues: Putative 4-hydroxy-4-methyl-2-oxoglutarate aldolase (160 aa).

Substrate contacts are provided by residues 78–81 (GDVI) and arginine 100. An a divalent metal cation-binding site is contributed by aspartate 101.

The protein belongs to the class II aldolase/RraA-like family. As to quaternary structure, homotrimer. It depends on a divalent metal cation as a cofactor.

The catalysed reaction is 4-hydroxy-4-methyl-2-oxoglutarate = 2 pyruvate. It carries out the reaction oxaloacetate + H(+) = pyruvate + CO2. Catalyzes the aldol cleavage of 4-hydroxy-4-methyl-2-oxoglutarate (HMG) into 2 molecules of pyruvate. Also contains a secondary oxaloacetate (OAA) decarboxylase activity due to the common pyruvate enolate transition state formed following C-C bond cleavage in the retro-aldol and decarboxylation reactions. In Mycolicibacterium paratuberculosis (strain ATCC BAA-968 / K-10) (Mycobacterium paratuberculosis), this protein is Putative 4-hydroxy-4-methyl-2-oxoglutarate aldolase.